A 333-amino-acid polypeptide reads, in one-letter code: Electron transfer flavoprotein subunit alpha, mitochondrial (333 aa).

A mitochondrion-targeting transit peptide spans 1–19; it reads MFRAAAPGQLRRAASLLRF. Residues 20–204 are domain I; the sequence is QSTLVIAEHA…GISEWLDQKL (185 aa). An N6-acetyllysine; alternate modification is found at Lys59. Lys59 carries the post-translational modification N6-succinyllysine; alternate. An N6-acetyllysine modification is found at Lys62. At Lys69 the chain carries N6-acetyllysine; alternate. N6-succinyllysine; alternate is present on Lys69. Lys75 bears the N6-acetyllysine mark. Lys85 is subject to N6-acetyllysine; alternate. Lys85 bears the N6-succinyllysine; alternate mark. Thr93 is subject to Phosphothreonine. Residues Lys101 and Lys139 each carry the N6-acetyllysine modification. Ser140 carries the post-translational modification Phosphoserine. The residue at position 158 (Lys158) is an N6-acetyllysine; alternate. Lys158 carries the post-translational modification N6-succinyllysine; alternate. Position 164 is an N6-acetyllysine (Lys164). An N6-succinyllysine modification is found at Lys187. At Lys203 the chain carries N6-acetyllysine; alternate. N6-succinyllysine; alternate is present on Lys203. The interval 205 to 333 is domain II; the sequence is TKSDRPELTG…PEMTEILKKK (129 aa). Position 216 is an N6-succinyllysine (Lys216). Arg223 provides a ligand contact to FAD. Residues Lys226 and Lys232 each carry the N6-acetyllysine; alternate modification. Residues Lys226 and Lys232 each carry the N6-succinyllysine; alternate modification. Residues Ser248, 263 to 266, 281 to 286, and Asn300 contribute to the FAD site; these read VGQT and SGAIQH. At Lys301 the chain carries N6-succinyllysine. Position 318 to 319 (318 to 319) interacts with FAD; sequence DL.

It belongs to the ETF alpha-subunit/FixB family. Heterodimer composed of ETFA and ETFB. Identified in a complex that contains ETFA, ETFB and ETFRF1. Interaction with ETFRF1 promotes dissociation of the bound FAD and loss of electron transfer activity. Interacts with TASOR. The cofactor is FAD. Expressed in the spermatogonia, spermatocytes, ovary and granular cells within the cerebellum.

It localises to the mitochondrion matrix. In terms of biological role, heterodimeric electron transfer flavoprotein that accepts electrons from several mitochondrial dehydrogenases, including acyl-CoA dehydrogenases, glutaryl-CoA and sarcosine dehydrogenase. It transfers the electrons to the main mitochondrial respiratory chain via ETF-ubiquinone oxidoreductase (ETF dehydrogenase). Required for normal mitochondrial fatty acid oxidation and normal amino acid metabolism. In Mus musculus (Mouse), this protein is Electron transfer flavoprotein subunit alpha, mitochondrial (Etfa).